Reading from the N-terminus, the 226-residue chain is Ribosome maturation factor RimM (226 aa).

The PRC barrel domain maps to 144–225 (ADEFYWVDLI…RIVVDWEADY (82 aa)).

Belongs to the RimM family. In terms of assembly, binds ribosomal protein uS19.

The protein resides in the cytoplasm. Functionally, an accessory protein needed during the final step in the assembly of 30S ribosomal subunit, possibly for assembly of the head region. Essential for efficient processing of 16S rRNA. May be needed both before and after RbfA during the maturation of 16S rRNA. It has affinity for free ribosomal 30S subunits but not for 70S ribosomes. This Burkholderia ambifaria (strain ATCC BAA-244 / DSM 16087 / CCUG 44356 / LMG 19182 / AMMD) (Burkholderia cepacia (strain AMMD)) protein is Ribosome maturation factor RimM.